We begin with the raw amino-acid sequence, 336 residues long: MSFNLHNRNLLSLIHHNARELRYLLDLARDLKRAKYSGTEQPRLLRKNIALIFEKTSTRTRCAFEVAAYDQGANVTYIDPASSQIGHKESMRDTARVLGRMYDAIEYRGFSQEIVEELAHHAGVPVFNGLTDEYHPTQMLADVMTMREHSDKPLHDIRYAYLGDARNNMGNSLLLIGAKLGMDVRIGAPKSLWPAADFIAQCEAFAAESGARLTLTEDPYEAVKGVDFIHTDVWVSMGEPVEAWDERINALLPYQVNRKLIESTGNPRTRFMHCLPSFHNCETKVGKQIAERYPHLKDGIEVTDEVFESPRCIAFEQAENRMHTIKAVLVSTLGGI.

Residues 57–60 (STRT), Gln84, Arg108, and 135–138 (HPTQ) contribute to the carbamoyl phosphate site. L-ornithine contacts are provided by residues Asn168, Asp232, and 236–237 (SM). Carbamoyl phosphate is bound by residues 274-275 (CL) and Arg321.

The protein belongs to the aspartate/ornithine carbamoyltransferase superfamily. OTCase family.

Its subcellular location is the cytoplasm. It catalyses the reaction carbamoyl phosphate + L-ornithine = L-citrulline + phosphate + H(+). The protein operates within amino-acid degradation; L-arginine degradation via ADI pathway; carbamoyl phosphate from L-arginine: step 2/2. In terms of biological role, reversibly catalyzes the transfer of the carbamoyl group from carbamoyl phosphate (CP) to the N(epsilon) atom of ornithine (ORN) to produce L-citrulline. This Burkholderia pseudomallei (strain K96243) protein is Ornithine carbamoyltransferase, catabolic.